Here is a 143-residue protein sequence, read N- to C-terminus: Transcriptional regulator MraZ (143 aa).

SpoVT-AbrB domains lie at 5–47 (QYEH…SLEE) and 76–119 (AVEC…SKEV).

The protein belongs to the MraZ family. Forms oligomers.

It is found in the cytoplasm. It localises to the nucleoid. This Thermoanaerobacter pseudethanolicus (strain ATCC 33223 / 39E) (Clostridium thermohydrosulfuricum) protein is Transcriptional regulator MraZ.